The following is a 618-amino-acid chain: UvrABC system protein C (618 aa).

The GIY-YIG domain maps to 20-98; that stretch reads TAPGVYRMYA…IKSLSPRYNV (79 aa). Residues 207-242 form the UVR domain; the sequence is DQLGEEIMHSMQQASEALEFERAARLRDLLSSLRSM.

The protein belongs to the UvrC family. Interacts with UvrB in an incision complex.

It is found in the cytoplasm. In terms of biological role, the UvrABC repair system catalyzes the recognition and processing of DNA lesions. UvrC both incises the 5' and 3' sides of the lesion. The N-terminal half is responsible for the 3' incision and the C-terminal half is responsible for the 5' incision. The polypeptide is UvrABC system protein C (Xanthomonas campestris pv. campestris (strain B100)).